We begin with the raw amino-acid sequence, 507 residues long: Phospho-2-dehydro-3-deoxyheptonate aldolase 2, chloroplastic (507 aa).

Belongs to the class-II DAHP synthase family.

It is found in the plastid. The protein resides in the chloroplast. The catalysed reaction is D-erythrose 4-phosphate + phosphoenolpyruvate + H2O = 7-phospho-2-dehydro-3-deoxy-D-arabino-heptonate + phosphate. The protein operates within metabolic intermediate biosynthesis; chorismate biosynthesis; chorismate from D-erythrose 4-phosphate and phosphoenolpyruvate: step 1/7. This chain is Phospho-2-dehydro-3-deoxyheptonate aldolase 2, chloroplastic (DHS2), found in Arabidopsis thaliana (Mouse-ear cress).